The chain runs to 319 residues: GTP 3',8-cyclase (319 aa).

The Radical SAM core domain maps to 4 to 219; sequence KHGRKINYLR…SKHSDLIPVE (216 aa). A GTP-binding site is contributed by R13. [4Fe-4S] cluster contacts are provided by C20 and C24. S-adenosyl-L-methionine is bound at residue Y26. C27 contacts [4Fe-4S] cluster. Residue R63 coordinates GTP. G67 is an S-adenosyl-L-methionine binding site. T94 serves as a coordination point for GTP. Residue S118 participates in S-adenosyl-L-methionine binding. K155 serves as a coordination point for GTP. M189 contributes to the S-adenosyl-L-methionine binding site. [4Fe-4S] cluster contacts are provided by C249 and C252. Position 254–256 (254–256) interacts with GTP; the sequence is RVR. C266 is a binding site for [4Fe-4S] cluster.

This sequence belongs to the radical SAM superfamily. MoaA family. Monomer and homodimer. [4Fe-4S] cluster is required as a cofactor.

The enzyme catalyses GTP + AH2 + S-adenosyl-L-methionine = (8S)-3',8-cyclo-7,8-dihydroguanosine 5'-triphosphate + 5'-deoxyadenosine + L-methionine + A + H(+). Its pathway is cofactor biosynthesis; molybdopterin biosynthesis. Its function is as follows. Catalyzes the cyclization of GTP to (8S)-3',8-cyclo-7,8-dihydroguanosine 5'-triphosphate. The protein is GTP 3',8-cyclase of Clostridium botulinum (strain Okra / Type B1).